A 208-amino-acid polypeptide reads, in one-letter code: LexA repressor (208 aa).

Positions 28 to 48 (RAEIARQLGFRSANAAEEHLK) form a DNA-binding region, H-T-H motif. Residues S125 and K162 each act as for autocatalytic cleavage activity in the active site.

This sequence belongs to the peptidase S24 family. Homodimer.

The enzyme catalyses Hydrolysis of Ala-|-Gly bond in repressor LexA.. Functionally, represses a number of genes involved in the response to DNA damage (SOS response), including recA and lexA. In the presence of single-stranded DNA, RecA interacts with LexA causing an autocatalytic cleavage which disrupts the DNA-binding part of LexA, leading to derepression of the SOS regulon and eventually DNA repair. The chain is LexA repressor from Alteromonas mediterranea (strain DSM 17117 / CIP 110805 / LMG 28347 / Deep ecotype).